We begin with the raw amino-acid sequence, 1388 residues long: DNA-directed RNA polymerase subunit beta' (1388 aa).

Residues cysteine 65, cysteine 67, cysteine 80, and cysteine 83 each coordinate Zn(2+). The Mg(2+) site is built by aspartate 456, aspartate 458, and aspartate 460. Zn(2+) contacts are provided by cysteine 812, cysteine 887, cysteine 894, and cysteine 897.

It belongs to the RNA polymerase beta' chain family. In terms of assembly, the RNAP catalytic core consists of 2 alpha, 1 beta, 1 beta' and 1 omega subunit. When a sigma factor is associated with the core the holoenzyme is formed, which can initiate transcription. The cofactor is Mg(2+). Zn(2+) serves as cofactor.

The catalysed reaction is RNA(n) + a ribonucleoside 5'-triphosphate = RNA(n+1) + diphosphate. Its function is as follows. DNA-dependent RNA polymerase catalyzes the transcription of DNA into RNA using the four ribonucleoside triphosphates as substrates. In Protochlamydia amoebophila (strain UWE25), this protein is DNA-directed RNA polymerase subunit beta'.